Reading from the N-terminus, the 213-residue chain is Imidazole glycerol phosphate synthase subunit HisH (213 aa).

Positions Thr-8–Pro-213 constitute a Glutamine amidotransferase type-1 domain. Catalysis depends on Cys-91, which acts as the Nucleophile. Residues His-193 and Glu-195 contribute to the active site.

As to quaternary structure, heterodimer of HisH and HisF.

Its subcellular location is the cytoplasm. It catalyses the reaction 5-[(5-phospho-1-deoxy-D-ribulos-1-ylimino)methylamino]-1-(5-phospho-beta-D-ribosyl)imidazole-4-carboxamide + L-glutamine = D-erythro-1-(imidazol-4-yl)glycerol 3-phosphate + 5-amino-1-(5-phospho-beta-D-ribosyl)imidazole-4-carboxamide + L-glutamate + H(+). It carries out the reaction L-glutamine + H2O = L-glutamate + NH4(+). It functions in the pathway amino-acid biosynthesis; L-histidine biosynthesis; L-histidine from 5-phospho-alpha-D-ribose 1-diphosphate: step 5/9. Functionally, IGPS catalyzes the conversion of PRFAR and glutamine to IGP, AICAR and glutamate. The HisH subunit catalyzes the hydrolysis of glutamine to glutamate and ammonia as part of the synthesis of IGP and AICAR. The resulting ammonia molecule is channeled to the active site of HisF. The polypeptide is Imidazole glycerol phosphate synthase subunit HisH (Zymomonas mobilis subsp. mobilis (strain ATCC 31821 / ZM4 / CP4)).